A 112-amino-acid polypeptide reads, in one-letter code: Protein Churchill (112 aa).

Zn(2+) is bound by residues Cys2, Cys5, Cys30, Cys33, His59, Cys61, Cys64, His66, His71, Cys88, and Cys91.

The protein belongs to the Churchill family.

Its function is as follows. Transcriptional activator that mediates FGF signaling during neural development. Plays a role in the regulation of cell movement. Does not bind DNA by itself. The sequence is that of Protein Churchill (churc1) from Xenopus laevis (African clawed frog).